Here is a 171-residue protein sequence, read N- to C-terminus: Co-chaperone protein HscB (171 aa).

One can recognise a J domain in the interval 2–74 (DYFTLFGLPA…LTRAEYLLSL (73 aa)).

Belongs to the HscB family. Interacts with HscA and stimulates its ATPase activity. Interacts with IscU.

Co-chaperone involved in the maturation of iron-sulfur cluster-containing proteins. Seems to help targeting proteins to be folded toward HscA. This Citrobacter koseri (strain ATCC BAA-895 / CDC 4225-83 / SGSC4696) protein is Co-chaperone protein HscB.